The primary structure comprises 161 residues: Ferric uptake regulation protein 1 (161 aa).

Zn(2+) contacts are provided by C94 and C97.

It belongs to the Fur family.

The protein resides in the cytoplasm. Functionally, acts as a global negative controlling element, employing Fe(2+) as a cofactor to bind the operator of the repressed genes. The protein is Ferric uptake regulation protein 1 (fur1) of Mycolicibacterium fortuitum (Mycobacterium fortuitum).